Here is a 265-residue protein sequence, read N- to C-terminus: Glycosylphosphatidylinositol anchor biosynthesis protein 11 (265 aa).

2 helical membrane-spanning segments follow: residues 49–69 and 79–99; these read LLVV…SGLT and GFLT…INLL. N-linked (GlcNAc...) asparagine glycans are attached at residues Asn111 and Asn112. 4 helical membrane passes run 137-157, 166-186, 209-229, and 240-260; these read IFVS…MGAP, LYLS…LSNL, ILSS…PIPL, and ITLL…SLIV.

This sequence belongs to the PIGF family.

Its subcellular location is the endoplasmic reticulum membrane. It participates in glycolipid biosynthesis; glycosylphosphatidylinositol-anchor biosynthesis. Its function is as follows. Acts in the GPI biosynthetic pathway between GlcNAc-PI synthesis and GPI transfer to protein. This is Glycosylphosphatidylinositol anchor biosynthesis protein 11 (GPI11) from Candida albicans (strain SC5314 / ATCC MYA-2876) (Yeast).